Reading from the N-terminus, the 316-residue chain is Homoserine kinase (316 aa).

An ATP-binding site is contributed by 97 to 107 (PPARGLGSSAS).

It belongs to the GHMP kinase family. Homoserine kinase subfamily.

It is found in the cytoplasm. It catalyses the reaction L-homoserine + ATP = O-phospho-L-homoserine + ADP + H(+). Its pathway is amino-acid biosynthesis; L-threonine biosynthesis; L-threonine from L-aspartate: step 4/5. In terms of biological role, catalyzes the ATP-dependent phosphorylation of L-homoserine to L-homoserine phosphate. The protein is Homoserine kinase of Prochlorococcus marinus (strain MIT 9313).